The sequence spans 66 residues: Surface composition regulator (66 aa).

Belongs to the GlgS family.

Major determinant of cell surface composition. Negatively regulates motility, adhesion and synthesis of biofilm exopolysaccharides. The sequence is that of Surface composition regulator from Shigella dysenteriae serotype 1 (strain Sd197).